Reading from the N-terminus, the 201-residue chain is Snake venom metalloproteinase trimerelysin-2 (201 aa).

The residue at position 1 (glutamine 1) is a Pyrrolidone carboxylic acid. The 196-residue stretch at 6 to 201 (RYIELAIVVD…YNPQCILNAP (196 aa)) folds into the Peptidase M12B domain. Residue asparagine 72 is glycosylated (N-linked (GlcNAc...) asparagine). 3 disulfides stabilise this stretch: cysteine 117/cysteine 196, cysteine 158/cysteine 180, and cysteine 160/cysteine 163. Histidine 142 lines the Zn(2+) pocket. The active site involves glutamate 143. Zn(2+) is bound by residues histidine 146 and histidine 152.

The protein belongs to the venom metalloproteinase (M12B) family. P-I subfamily. Monomer. It depends on Zn(2+) as a cofactor. Expressed by the venom gland.

It is found in the secreted. The catalysed reaction is Cleavage of 3-Asn-|-Gln-4, 10-His-|-Leu-11 and 14-Ala-|-Leu-15 in the insulin B chain, and the bond Z-Gly-Pro-|-Leu-Gly-Pro in a small molecule substrate of microbial collagenase.. Major venom non-hemorrhagic metalloproteinase. The protein is Snake venom metalloproteinase trimerelysin-2 of Protobothrops flavoviridis (Habu).